We begin with the raw amino-acid sequence, 591 residues long: L-fucose isomerase (591 aa).

Active-site proton acceptor residues include Glu-337 and Asp-361. Mn(2+) is bound by residues Glu-337, Asp-361, and His-528.

It belongs to the L-fucose isomerase family. In terms of assembly, homohexamer. It depends on Mn(2+) as a cofactor.

The protein resides in the cytoplasm. The catalysed reaction is L-fucose = L-fuculose. Its pathway is carbohydrate degradation; L-fucose degradation; L-lactaldehyde and glycerone phosphate from L-fucose: step 1/3. Functionally, converts the aldose L-fucose into the corresponding ketose L-fuculose. This is L-fucose isomerase from Escherichia coli (strain ATCC 8739 / DSM 1576 / NBRC 3972 / NCIMB 8545 / WDCM 00012 / Crooks).